The chain runs to 503 residues: Aspartyl/glutamyl-tRNA(Asn/Gln) amidotransferase subunit B (503 aa).

The protein belongs to the GatB/GatE family. GatB subfamily. Heterotrimer of A, B and C subunits.

The catalysed reaction is L-glutamyl-tRNA(Gln) + L-glutamine + ATP + H2O = L-glutaminyl-tRNA(Gln) + L-glutamate + ADP + phosphate + H(+). The enzyme catalyses L-aspartyl-tRNA(Asn) + L-glutamine + ATP + H2O = L-asparaginyl-tRNA(Asn) + L-glutamate + ADP + phosphate + 2 H(+). Its function is as follows. Allows the formation of correctly charged Asn-tRNA(Asn) or Gln-tRNA(Gln) through the transamidation of misacylated Asp-tRNA(Asn) or Glu-tRNA(Gln) in organisms which lack either or both of asparaginyl-tRNA or glutaminyl-tRNA synthetases. The reaction takes place in the presence of glutamine and ATP through an activated phospho-Asp-tRNA(Asn) or phospho-Glu-tRNA(Gln). This is Aspartyl/glutamyl-tRNA(Asn/Gln) amidotransferase subunit B from Mycobacterium avium (strain 104).